The chain runs to 205 residues: uncharacterized protein (205 aa).

The protein belongs to the flavoredoxin family. FMN serves as cofactor.

This is an uncharacterized protein from Bacillus subtilis (strain 168).